The primary structure comprises 346 residues: Calcium homeostasis modulator protein 1 (346 aa).

The Cytoplasmic portion of the chain corresponds to 1-21 (MMDKFRMIFQFLQSNQESFMN). Residues 10–37 (QFLQSNQESFMNGICGIMALASAQMYSA) are central pore. A helical membrane pass occupies residues 22–37 (GICGIMALASAQMYSA). The Extracellular portion of the chain corresponds to 38-49 (FDFNCPCLPGYN). Cystine bridges form between Cys42–Cys127 and Cys44–Cys161. A helical transmembrane segment spans residues 50–72 (AAYSAGILLAPPLVLFLLGLVMN). Positions 63 to 70 (VLFLLGLV) are phospholipid-binding. Topologically, residues 73–99 (NNVSMLAEEWKRPLGRRAKDPAVLRYM) are cytoplasmic. The chain crosses the membrane as a helical span at residues 100–125 (FCSMAQRALIAPVVWVAVTLLDGKCF). Cys101 is lipidated: S-palmitoyl cysteine. A phospholipid-binding region spans residues 105–117 (QRALIAPVVWVAV). Residues 126–180 (LCAFCTAVPVSALGNGSLAPGLPAPELARLLARVPCPEIYDGDWLLAREVAVRYL) are Extracellular-facing. Residue Asn140 is glycosylated (N-linked (GlcNAc...) asparagine). A helical transmembrane segment spans residues 181–206 (RCISQALGWSFVLLTTLLAFVVRSVR). The segment at 192–202 (VLLTTLLAFVV) is phospholipid-binding. The Cytoplasmic portion of the chain corresponds to 207–346 (PCFTQAAFLK…KEVATYFSKV (140 aa)). The S-palmitoyl cysteine moiety is linked to residue Cys208. The interval 313–346 (LRLGQEEPPLMGNGWAGGGPRPPRKEVATYFSKV) is disordered.

Belongs to the CALHM family. Oligomerizes to form hexamers and octamers. Does not form gap junctions. Associates with CALHM3 as a pore-forming subunit in a hetero-hexameric channel complex. In terms of processing, N-glycosylated. Assembly with CALHM3 is associated with N-glycan remodeling and formation of hybrid complex- and high mannose-type glycochains. This N-glycan processing regulates channel trafficking and gating kinetics. Palmitoylated by ZDHHC3, ZDHHC20 and possibly ZDHHC7. Palmitoylation regulates voltage-dependent gating of the channel by shifting it toward more depolarized potentials. In terms of tissue distribution, predominantly expressed in adult brain. Detected also in retinoic acid-differentiated SH-SY5Y cells. Specifically expressed in circumvallate taste bud cells.

It is found in the cell membrane. The protein localises to the endoplasmic reticulum membrane. The protein resides in the basolateral cell membrane. It catalyses the reaction ATP(in) = ATP(out). It carries out the reaction Ca(2+)(in) = Ca(2+)(out). The enzyme catalyses Mg(2+)(in) = Mg(2+)(out). The catalysed reaction is Na(+)(in) = Na(+)(out). It catalyses the reaction K(+)(in) = K(+)(out). It carries out the reaction Li(+)(in) = Li(+)(out). The enzyme catalyses Rb(+)(in) = Rb(+)(out). The catalysed reaction is Cs(+)(in) = Cs(+)(out). It catalyses the reaction chloride(in) = chloride(out). Regulated by membrane voltage and extracellular Ca(2+). Inhibited by Gd(3+), ruthenium red, and Zn(2+) and partially inhibited by 2-aminoethoxydiphenyl borate. Pore-forming subunit of gustatory voltage-gated ion channels required for sensory perception of sweet, bitter and umami tastes. With CALHM3 forms a fast-activating voltage-gated ATP-release channel in type II taste bud cells, ATP acting as a neurotransmitter to activate afferent neural gustatory pathways. Acts both as a voltage-gated and calcium-activated ion channel: mediates neuronal excitability in response to membrane depolarization and low extracellular Ca(2+) concentration. Has poor ion selectivity and forms a wide pore (around 14 Angstroms) that mediates permeation of small ions including Ca(2+), Na(+), K(+) and Cl(-), as well as larger ions such as ATP(4-). Mediates Ca(2+) influx and downstream activation of the ERK1 and ERK2 cascade in neurons. Triggers endoplasmic reticulum stress by reducing the Ca(2+) content of the endoplasmic reticulum. May indirectly control amyloid precursor protein (APP) proteolysis and aggregated amyloid-beta (Abeta) peptides levels in a Ca(2+)-dependent manner. The protein is Calcium homeostasis modulator protein 1 of Homo sapiens (Human).